A 348-amino-acid polypeptide reads, in one-letter code: 3-isopropylmalate dehydrogenase (348 aa).

An NAD(+)-binding site is contributed by 76–87; sequence GPKWTDPNNRPE. Residues R94, R104, R132, and D217 each contribute to the substrate site. Positions 217, 241, and 245 each coordinate Mg(2+). 275–287 contributes to the NAD(+) binding site; the sequence is GSAPDIAGKNVAN.

It belongs to the isocitrate and isopropylmalate dehydrogenases family. LeuB type 1 subfamily. Homodimer. It depends on Mg(2+) as a cofactor. The cofactor is Mn(2+).

Its subcellular location is the cytoplasm. The enzyme catalyses (2R,3S)-3-isopropylmalate + NAD(+) = 4-methyl-2-oxopentanoate + CO2 + NADH. It participates in amino-acid biosynthesis; L-leucine biosynthesis; L-leucine from 3-methyl-2-oxobutanoate: step 3/4. Its function is as follows. Catalyzes the oxidation of 3-carboxy-2-hydroxy-4-methylpentanoate (3-isopropylmalate) to 3-carboxy-4-methyl-2-oxopentanoate. The product decarboxylates to 4-methyl-2 oxopentanoate. In Staphylococcus aureus (strain MRSA252), this protein is 3-isopropylmalate dehydrogenase.